The primary structure comprises 535 residues: Inositol 1,4,5-trisphosphate receptor-interacting protein-like 2 (535 aa).

A signal peptide spans 1-38 (MSVHYTLNLRVFWPLVTGLCTALVCLYHVLRGSGGARA). Residues 39-43 (EPADG) lie on the Extracellular side of the membrane. Residues 44–64 (VDGGFPLLKVAVLLLLSYVLL) traverse the membrane as a helical segment. The Cytoplasmic segment spans residues 65 to 535 (RCRHAVRQRF…RTQGFLEGEP (471 aa)). A Phosphoserine modification is found at S139.

Belongs to the ITPRIP family.

Its subcellular location is the membrane. This Homo sapiens (Human) protein is Inositol 1,4,5-trisphosphate receptor-interacting protein-like 2 (ITPRIPL2).